We begin with the raw amino-acid sequence, 198 residues long: Holliday junction branch migration complex subunit RuvA (198 aa).

The domain I stretch occupies residues 1–63 (MYDYIKGQLT…EDAHLLFGFH (63 aa)). The interval 64-142 (TKDEKDVFLK…EAPQETGNTK (79 aa)) is domain II. Residues 143 to 147 (ARSNK) are flexible linker. The segment at 148-198 (AGNTQLDEAIEALLALGYKATELKKIRAFFEGTSETAEQYIKSALKLLMKG) is domain III.

Belongs to the RuvA family. As to quaternary structure, homotetramer. Forms an RuvA(8)-RuvB(12)-Holliday junction (HJ) complex. HJ DNA is sandwiched between 2 RuvA tetramers; dsDNA enters through RuvA and exits via RuvB. An RuvB hexamer assembles on each DNA strand where it exits the tetramer. Each RuvB hexamer is contacted by two RuvA subunits (via domain III) on 2 adjacent RuvB subunits; this complex drives branch migration. In the full resolvosome a probable DNA-RuvA(4)-RuvB(12)-RuvC(2) complex forms which resolves the HJ.

The protein resides in the cytoplasm. The RuvA-RuvB-RuvC complex processes Holliday junction (HJ) DNA during genetic recombination and DNA repair, while the RuvA-RuvB complex plays an important role in the rescue of blocked DNA replication forks via replication fork reversal (RFR). RuvA specifically binds to HJ cruciform DNA, conferring on it an open structure. The RuvB hexamer acts as an ATP-dependent pump, pulling dsDNA into and through the RuvAB complex. HJ branch migration allows RuvC to scan DNA until it finds its consensus sequence, where it cleaves and resolves the cruciform DNA. The sequence is that of Holliday junction branch migration complex subunit RuvA from Streptococcus pyogenes serotype M18 (strain MGAS8232).